Here is a 97-residue protein sequence, read N- to C-terminus: Mapk-regulated corepressor-interacting protein 1 (97 aa).

2 disordered regions span residues 1-29 and 72-97; these read MTSS…NEIF and SNSL…PKKS. Polar residues predominate over residues 17 to 28; it reads ASNTRSPSSNEI. Residues 82–97 show a composition bias toward basic and acidic residues; that stretch reads DLNDLKRRTVQDPKKS.

The protein belongs to the MCRIP family.

The protein resides in the nucleus. It localises to the cytoplasm. It is found in the stress granule. Functionally, may play a role in the regulation of the epithelial-mesenchymal transition. The polypeptide is Mapk-regulated corepressor-interacting protein 1 (Mcrip1) (Xenopus tropicalis (Western clawed frog)).